A 421-amino-acid chain; its full sequence is Periplasmic [Fe] hydrogenase large subunit (421 aa).

4Fe-4S ferredoxin-type domains follow at residues 26–57 (HFVQ…MGEP) and 59–86 (SIPH…EAQS). Cysteine 35, cysteine 38, cysteine 41, cysteine 45, cysteine 66, cysteine 69, cysteine 72, cysteine 76, cysteine 179, cysteine 234, cysteine 378, and cysteine 382 together coordinate [4Fe-4S] cluster. Position 382 (cysteine 382) interacts with Fe(2+).

In terms of assembly, heterodimer of a large and a small subunit. It depends on [4Fe-4S] cluster as a cofactor. The cofactor is Fe(2+).

Its subcellular location is the periplasm. It catalyses the reaction H2 + 2 oxidized [2Fe-2S]-[ferredoxin] = 2 reduced [2Fe-2S]-[ferredoxin] + 2 H(+). Functionally, may be involved in hydrogen uptake for the reduction of sulfate to hydrogen sulfide in an electron transport chain. Cytochrome c3 is likely to be the physiological electron carrier for the enzyme. The sequence is that of Periplasmic [Fe] hydrogenase large subunit (hydA) from Nitratidesulfovibrio vulgaris (strain ATCC 29579 / DSM 644 / CCUG 34227 / NCIMB 8303 / VKM B-1760 / Hildenborough) (Desulfovibrio vulgaris).